We begin with the raw amino-acid sequence, 371 residues long: Chaperone protein DnaJ (371 aa).

In terms of domain architecture, J spans 5-69 (DYYEVLGLSK…QKRAQYDQFG (65 aa)). The segment at 133 to 215 (GKELNVEIPV…CHGSGKVRKR (83 aa)) adopts a CR-type zinc-finger fold. Residues cysteine 146, cysteine 149, cysteine 163, cysteine 166, cysteine 189, cysteine 192, cysteine 203, and cysteine 206 each coordinate Zn(2+). CXXCXGXG motif repeat units lie at residues 146–153 (CDTCKGSG), 163–170 (CKHCSGSG), 189–196 (CSHCSGTG), and 203–210 (CTTCHGSG).

This sequence belongs to the DnaJ family. Homodimer. Zn(2+) is required as a cofactor.

Its subcellular location is the cytoplasm. Functionally, participates actively in the response to hyperosmotic and heat shock by preventing the aggregation of stress-denatured proteins and by disaggregating proteins, also in an autonomous, DnaK-independent fashion. Unfolded proteins bind initially to DnaJ; upon interaction with the DnaJ-bound protein, DnaK hydrolyzes its bound ATP, resulting in the formation of a stable complex. GrpE releases ADP from DnaK; ATP binding to DnaK triggers the release of the substrate protein, thus completing the reaction cycle. Several rounds of ATP-dependent interactions between DnaJ, DnaK and GrpE are required for fully efficient folding. Also involved, together with DnaK and GrpE, in the DNA replication of plasmids through activation of initiation proteins. The protein is Chaperone protein DnaJ of Bacillus anthracis (strain A0248).